The sequence spans 38 residues: uncharacterized protein (38 aa).

This is an uncharacterized protein from Saccharomyces cerevisiae (strain ATCC 204508 / S288c) (Baker's yeast).